A 342-amino-acid polypeptide reads, in one-letter code: Heat-inducible transcription repressor HrcA (342 aa).

The protein belongs to the HrcA family.

Its function is as follows. Negative regulator of class I heat shock genes (grpE-dnaK-dnaJ and groELS operons). Prevents heat-shock induction of these operons. This is Heat-inducible transcription repressor HrcA from Onion yellows phytoplasma (strain OY-M).